Consider the following 121-residue polypeptide: Large ribosomal subunit protein bL12 (121 aa).

This sequence belongs to the bacterial ribosomal protein bL12 family. In terms of assembly, homodimer. Part of the ribosomal stalk of the 50S ribosomal subunit. Forms a multimeric L10(L12)X complex, where L10 forms an elongated spine to which 2 to 4 L12 dimers bind in a sequential fashion. Binds GTP-bound translation factors.

Forms part of the ribosomal stalk which helps the ribosome interact with GTP-bound translation factors. Is thus essential for accurate translation. The polypeptide is Large ribosomal subunit protein bL12 (Shewanella pealeana (strain ATCC 700345 / ANG-SQ1)).